The sequence spans 122 residues: Co-chaperonin GroES (122 aa).

The protein belongs to the GroES chaperonin family. As to quaternary structure, heptamer of 7 subunits arranged in a ring. Interacts with the chaperonin GroEL.

The protein localises to the cytoplasm. Its function is as follows. Together with the chaperonin GroEL, plays an essential role in assisting protein folding. The GroEL-GroES system forms a nano-cage that allows encapsulation of the non-native substrate proteins and provides a physical environment optimized to promote and accelerate protein folding. GroES binds to the apical surface of the GroEL ring, thereby capping the opening of the GroEL channel. This Aquifex aeolicus (strain VF5) protein is Co-chaperonin GroES.